An 89-amino-acid polypeptide reads, in one-letter code: Small ribosomal subunit protein uS17 (89 aa).

It belongs to the universal ribosomal protein uS17 family. As to quaternary structure, part of the 30S ribosomal subunit.

One of the primary rRNA binding proteins, it binds specifically to the 5'-end of 16S ribosomal RNA. In Syntrophomonas wolfei subsp. wolfei (strain DSM 2245B / Goettingen), this protein is Small ribosomal subunit protein uS17.